The following is a 193-amino-acid chain: MTEYLLLFVGTVLVNNFVLVKFLGLCPFMGVSKKLETAIGMGLATTFVLTLASVCAWMVNSFILLPLGLIYLRTLAFILVIAVVVQFTELVVRKTSPTLYRLLGIFLPLITTNCAVLGVALLNVNQSHNFMQSAVYGFSAAAGFSLVMVLFAAIRERLAVADVPAPFRGSSIALITAGLMSLAFMGFTGLVKF.

6 helical membrane passes run 5–25 (LLLF…FLGL), 39–59 (IGMG…AWMV), 62–82 (FILL…LVIA), 102–122 (LLGI…VALL), 134–154 (AVYG…FAAI), and 171–191 (SIAL…TGLV).

The protein belongs to the NqrDE/RnfAE family. In terms of assembly, the complex is composed of six subunits: RnfA, RnfB, RnfC, RnfD, RnfE and RnfG.

It is found in the cell inner membrane. Part of a membrane-bound complex that couples electron transfer with translocation of ions across the membrane. In Yersinia pestis bv. Antiqua (strain Nepal516), this protein is Ion-translocating oxidoreductase complex subunit A.